The sequence spans 421 residues: RNase J-like protein (421 aa).

Zn(2+)-binding residues include His-55, His-57, Asp-59, His-60, His-132, Asp-153, and His-389.

This sequence belongs to the metallo-beta-lactamase superfamily. RNA-metabolizing metallo-beta-lactamase-like family. As to quaternary structure, forms homodimers on heating to 60 degrees Celsius which may be the active form. Requires Zn(2+) as cofactor.

Inhibited by imidazole. Functionally, a 5'-3' exoribonuclease with a strong reference for 5'-monophosphorylated RNA and no endoribonuclease activty. In Methanocaldococcus jannaschii (strain ATCC 43067 / DSM 2661 / JAL-1 / JCM 10045 / NBRC 100440) (Methanococcus jannaschii), this protein is RNase J-like protein.